We begin with the raw amino-acid sequence, 502 residues long: Protein MGF 505-5R (502 aa).

The protein belongs to the asfivirus MGF 505 family.

Its function is as follows. Plays a role in virus cell tropism, and may be required for efficient virus replication in macrophages. In Ornithodoros (relapsing fever ticks), this protein is Protein MGF 505-5R.